A 115-amino-acid polypeptide reads, in one-letter code: Holo-[acyl-carrier-protein] synthase (115 aa).

2 residues coordinate Mg(2+): Asp-8 and Glu-50.

Belongs to the P-Pant transferase superfamily. AcpS family. It depends on Mg(2+) as a cofactor.

It is found in the cytoplasm. The enzyme catalyses apo-[ACP] + CoA = holo-[ACP] + adenosine 3',5'-bisphosphate + H(+). In terms of biological role, transfers the 4'-phosphopantetheine moiety from coenzyme A to a Ser of acyl-carrier-protein. This is Holo-[acyl-carrier-protein] synthase from Pseudarthrobacter chlorophenolicus (strain ATCC 700700 / DSM 12829 / CIP 107037 / JCM 12360 / KCTC 9906 / NCIMB 13794 / A6) (Arthrobacter chlorophenolicus).